A 121-amino-acid chain; its full sequence is Structural protein p14.5 (121 aa).

Disordered regions lie at residues 1–24 (MADF…IGSL) and 84–121 (TSLV…HKSK). Position 2 is an N-acetylalanine; by host (alanine 2). Over residues 104–121 (KPKKKKHLFPKLSSHKSK) the composition is skewed to basic residues.

This sequence belongs to the asfivirus structural protein p14.5 family. As to quaternary structure, interacts with the major capsid protein. Interacts with host IRF3; this interaction interferes with the recruitment of IRF3 to TBK1. Post-translationally, acetylated.

It localises to the virion. Structural protein required for transport of intracellular particles from the assembly sites to the plasma membrane. Binds to both ssDNA and dsDNA. Suppressed the activation of the cGAS/STING pathway by interfering with the recruitment of IRF3 to TBK1, which in turn suppresses IRF3 phosphorylation, decreasing interferon production. In Ornithodoros (relapsing fever ticks), this protein is Structural protein p14.5.